A 308-amino-acid chain; its full sequence is MTNGFTRLTEQFLIHIGVERGLATATVTAYESDIAKYIDWLETRGIHEPDAITKQDVEDYIAALDQAGESARSKARRLASIHEFHRFALGQHAVTADVSAAVKAPKGASTLPDVLTVDEVTRLLDAAAVGGSTDPVVLRDKALLEFMYATGCRVSEATGANLDDIDLDEHIARLMGKGSKQRLVPLGSYACRAITAYLNAGRGELEQRSSAKIPERRALFLNKRGKRISRQSVWEIVKATGERAGITKPLHPHTLRHSFATHLIQGGADVRTVQELLGHASVTTTQIYTHVSPETLIETYLTSHPRAR.

A Core-binding (CB) domain is found at 3-89 (NGFTRLTEQF…SIHEFHRFAL (87 aa)). Residues 110-301 (TLPDVLTVDE…SPETLIETYL (192 aa)) enclose the Tyr recombinase domain. Catalysis depends on residues arginine 153, lysine 177, histidine 253, arginine 256, and histidine 279. The active-site O-(3'-phospho-DNA)-tyrosine intermediate is the tyrosine 288.

The protein belongs to the 'phage' integrase family. XerD subfamily. In terms of assembly, forms a cyclic heterotetrameric complex composed of two molecules of XerC and two molecules of XerD.

The protein localises to the cytoplasm. In terms of biological role, site-specific tyrosine recombinase, which acts by catalyzing the cutting and rejoining of the recombining DNA molecules. The XerC-XerD complex is essential to convert dimers of the bacterial chromosome into monomers to permit their segregation at cell division. It also contributes to the segregational stability of plasmids. The polypeptide is Tyrosine recombinase XerD (Bifidobacterium longum (strain NCC 2705)).